A 145-amino-acid polypeptide reads, in one-letter code: Beta sliding clamp (145 aa).

It belongs to the beta sliding clamp family. Forms a ring-shaped head-to-tail homodimer around DNA which binds and tethers DNA polymerases and other proteins to the DNA. The DNA replisome complex has a single clamp-loading complex (3 tau and 1 each of delta, delta', psi and chi subunits) which binds 3 Pol III cores (1 core on the leading strand and 2 on the lagging strand) each with a beta sliding clamp dimer. Additional proteins in the replisome are other copies of gamma, psi and chi, Ssb, DNA helicase and RNA primase.

The protein localises to the cytoplasm. Functionally, confers DNA tethering and processivity to DNA polymerases and other proteins. Acts as a clamp, forming a ring around DNA (a reaction catalyzed by the clamp-loading complex) which diffuses in an ATP-independent manner freely and bidirectionally along dsDNA. Initially characterized for its ability to contact the catalytic subunit of DNA polymerase III (Pol III), a complex, multichain enzyme responsible for most of the replicative synthesis in bacteria; Pol III exhibits 3'-5' exonuclease proofreading activity. The beta chain is required for initiation of replication as well as for processivity of DNA replication. The polypeptide is Beta sliding clamp (dnaN) (Vibrio harveyi (Beneckea harveyi)).